The sequence spans 133 residues: Ubiquitin-like FUBI-ribosomal protein eS30 fusion protein (133 aa).

One can recognise a Ubiquitin-like domain in the interval Met-1–Gly-74. Residue Lys-125 is modified to N6-succinyllysine.

The protein in the N-terminal section; belongs to the ubiquitin family. This sequence in the C-terminal section; belongs to the eukaryotic ribosomal protein eS30 family. As to quaternary structure, component of the 40S subunit of the ribosome. FUBI is cleaved from ribosomal protein S30 by the deubiquitinase USP36 before the assembly of ribosomal protein S30 into pre-40S ribosomal particles. FUBI removal from ribosomal protein S30 is a crucial event for the final maturation of pre-40S particles.

Its subcellular location is the cytoplasm. It localises to the nucleus. In terms of biological role, may have pro-apoptotic activity. Its function is as follows. Component of the 40S subunit of the ribosome. Contributes to the assembly and function of 40S ribosomal subunits. This is Ubiquitin-like FUBI-ribosomal protein eS30 fusion protein (FAU) from Oryctolagus cuniculus (Rabbit).